The primary structure comprises 194 residues: Peptidyl-tRNA hydrolase (194 aa).

Tyr16 provides a ligand contact to tRNA. Residue His21 is the Proton acceptor of the active site. Phe67, Asn69, and Asn115 together coordinate tRNA.

Belongs to the PTH family. In terms of assembly, monomer.

It localises to the cytoplasm. It carries out the reaction an N-acyl-L-alpha-aminoacyl-tRNA + H2O = an N-acyl-L-amino acid + a tRNA + H(+). In terms of biological role, hydrolyzes ribosome-free peptidyl-tRNAs (with 1 or more amino acids incorporated), which drop off the ribosome during protein synthesis, or as a result of ribosome stalling. Its function is as follows. Catalyzes the release of premature peptidyl moieties from peptidyl-tRNA molecules trapped in stalled 50S ribosomal subunits, and thus maintains levels of free tRNAs and 50S ribosomes. The protein is Peptidyl-tRNA hydrolase of Salmonella heidelberg (strain SL476).